The sequence spans 452 residues: Proline--tRNA ligase (452 aa).

It belongs to the class-II aminoacyl-tRNA synthetase family. ProS type 2 subfamily. Homodimer.

Its subcellular location is the cytoplasm. The enzyme catalyses tRNA(Pro) + L-proline + ATP = L-prolyl-tRNA(Pro) + AMP + diphosphate. In terms of biological role, catalyzes the attachment of proline to tRNA(Pro) in a two-step reaction: proline is first activated by ATP to form Pro-AMP and then transferred to the acceptor end of tRNA(Pro). This is Proline--tRNA ligase from Jannaschia sp. (strain CCS1).